Here is a 260-residue protein sequence, read N- to C-terminus: MNPDSDYPHLPNIKIHHPSSPRHSHHHSSSTPSAATPTPTAGARRKIGVAVDLSEESAFAVRWAVDHYIRPGDAVVILHVSPTSVLFGADWGPLPLQTPPPPSAATDPGAQPKPSQEDFDAFTSSKVADLAKPLKEAGFPHKIHIVKDHDMRERLCLETERLNLSAVIMGSRGFGAEKRGSDGKLGSVSDYCVHHCVCPVVVVRYPDDRDGPAPPGNVGATREAIVTVKSRRDDDDDDDEDHEAKIAAAASDHHEHIKDE.

The transit peptide at 1–33 (MNPDSDYPHLPNIKIHHPSSPRHSHHHSSSTPS) directs the protein to the chloroplast. The segment at 1–42 (MNPDSDYPHLPNIKIHHPSSPRHSHHHSSSTPSAATPTPTAG) is disordered. The span at 14 to 28 (KIHHPSSPRHSHHHS) shows a compositional bias: basic residues. Pro18 serves as a coordination point for ATP. Ser20 is subject to Phosphoserine; by MAPK3 and MAPK6. Low complexity predominate over residues 29 to 41 (SSTPSAATPTPTA). Val80 provides a ligand contact to ATP. The disordered stretch occupies residues 92–118 (GPLPLQTPPPPSAATDPGAQPKPSQED). ATP-binding positions include 170–179 (GSRGFGAEKR) and 187–189 (SVS). The interval 209 to 260 (RDGPAPPGNVGATREAIVTVKSRRDDDDDDDEDHEAKIAAAASDHHEHIKDE) is disordered. Phosphoserine is present on Ser230. The segment covering 251-260 (SDHHEHIKDE) has biased composition (basic and acidic residues).

This sequence belongs to the universal stress protein A family. Post-translationally, phosphorylated by MAPK3 and MAPK6 after pathogenic elicitation (e.g. bacterial flg22, Phytophthora infestans zoospores and xylanase).

Its subcellular location is the plastid. It localises to the chloroplast. This Arabidopsis thaliana (Mouse-ear cress) protein is Universal stress protein PHOS34.